Reading from the N-terminus, the 599-residue chain is MFS-type transporter ucsM (599 aa).

Residues 23–34 (AHHHGKEREAHR) show a composition bias toward basic and acidic residues. Positions 23–42 (AHHHGKEREAHRQSLSSVPG) are disordered. 8 consecutive transmembrane segments (helical) span residues 147–167 (VALGLVFSFLSYVIPIFGAWL), 178–198 (ILIGVLIGGVAHIIMIAGAVP), 204–224 (GKGTAPFLVSLFLLALGAGLF), 263–283 (IMLIFYALINVGAFYSLATVY), 291–311 (WLAFLLPGIIYLLLPLMLWYL), 386–406 (IFLYFPIYHLNDGGVGTILPS), 424–444 (FNPITIMITVPVLTYIVYPAL), and 454–474 (ISRITLGFWLAVISGLVSSLV). Residue Asn-517 is glycosylated (N-linked (GlcNAc...) asparagine). The next 2 membrane-spanning stretches (helical) occupy residues 539-559 (LFLFSTALSSALGLILTPAIV) and 563-583 (LVWVWAGPTIALAVQTVIFWV).

This sequence belongs to the major facilitator superfamily. Proton-dependent oligopeptide transporter (POT/PTR) (TC 2.A.17) family.

Its subcellular location is the membrane. In terms of biological role, MFS-type transporter; part of the gene cluster that mediates the biosynthesis of UCS1025A, a member of the pyrrolizidinone family that acts as a strong telomerase inhibitor and displays potent antibacterial and antitumor properties. These compounds share a hemiaminal-containing pyrrolizidinone core fused with a gamma-lactone, giving a furopyrrolizidine that is connected to a decalin fragment. The sequence is that of MFS-type transporter ucsM from Acremonium sp.